The sequence spans 341 residues: Glycerol-3-phosphate dehydrogenase [NAD(P)+] (341 aa).

4 residues coordinate NADPH: S14, F15, R35, and K108. 2 residues coordinate sn-glycerol 3-phosphate: K108 and G136. A140 lines the NADPH pocket. 5 residues coordinate sn-glycerol 3-phosphate: K191, D244, S254, R255, and N256. K191 (proton acceptor) is an active-site residue. R255 provides a ligand contact to NADPH. The NADPH site is built by V279 and E281.

This sequence belongs to the NAD-dependent glycerol-3-phosphate dehydrogenase family.

It localises to the cytoplasm. The catalysed reaction is sn-glycerol 3-phosphate + NAD(+) = dihydroxyacetone phosphate + NADH + H(+). It catalyses the reaction sn-glycerol 3-phosphate + NADP(+) = dihydroxyacetone phosphate + NADPH + H(+). Its pathway is membrane lipid metabolism; glycerophospholipid metabolism. Its function is as follows. Catalyzes the reduction of the glycolytic intermediate dihydroxyacetone phosphate (DHAP) to sn-glycerol 3-phosphate (G3P), the key precursor for phospholipid synthesis. The sequence is that of Glycerol-3-phosphate dehydrogenase [NAD(P)+] from Pseudomonas putida (strain ATCC 700007 / DSM 6899 / JCM 31910 / BCRC 17059 / LMG 24140 / F1).